We begin with the raw amino-acid sequence, 636 residues long: Probable potassium transport system protein Kup (636 aa).

12 consecutive transmembrane segments (helical) span residues 23–43 (LVIG…LYSL), 63–83 (IISL…VVFV), 114–134 (VLMM…VITP), 150–170 (PQLS…LFLI), 182–202 (FGPV…YNLV), 217–237 (ISFL…VFLV), 260–280 (WFVL…AMLL), 298–318 (LLIP…QAVI), 350–370 (IYLP…VISF), 379–399 (AYGI…AVVM), 407–427 (PALV…FFAA), and 432–452 (VAEG…LLMT).

It belongs to the HAK/KUP transporter (TC 2.A.72) family.

It localises to the cell inner membrane. The enzyme catalyses K(+)(in) + H(+)(in) = K(+)(out) + H(+)(out). Transport of potassium into the cell. Likely operates as a K(+):H(+) symporter. The chain is Probable potassium transport system protein Kup from Cupriavidus pinatubonensis (strain JMP 134 / LMG 1197) (Cupriavidus necator (strain JMP 134)).